A 101-amino-acid polypeptide reads, in one-letter code: uncharacterized protein (101 aa).

A helical membrane pass occupies residues 17 to 37; it reads VIKILLISGISRIIILILAMF.

Its subcellular location is the endoplasmic reticulum membrane. This is an uncharacterized protein from Schizosaccharomyces pombe (strain 972 / ATCC 24843) (Fission yeast).